Here is a 721-residue protein sequence, read N- to C-terminus: 1,4-alpha-glucan branching enzyme GlgB (721 aa).

Residue aspartate 400 is the Nucleophile of the active site. Catalysis depends on glutamate 453, which acts as the Proton donor.

Belongs to the glycosyl hydrolase 13 family. GlgB subfamily. In terms of assembly, monomer.

The catalysed reaction is Transfers a segment of a (1-&gt;4)-alpha-D-glucan chain to a primary hydroxy group in a similar glucan chain.. It participates in glycan biosynthesis; glycogen biosynthesis. Catalyzes the formation of the alpha-1,6-glucosidic linkages in glycogen by scission of a 1,4-alpha-linked oligosaccharide from growing alpha-1,4-glucan chains and the subsequent attachment of the oligosaccharide to the alpha-1,6 position. The protein is 1,4-alpha-glucan branching enzyme GlgB of Chlamydia abortus (strain DSM 27085 / S26/3) (Chlamydophila abortus).